A 270-amino-acid polypeptide reads, in one-letter code: Inositol monophosphatase (270 aa).

Mg(2+)-binding residues include E71, D91, L93, and D94. Residue E71 participates in substrate binding. Residues 93–96 (LDGT), 194–196 (GSC), E213, and D221 contribute to the substrate site. Residue D221 participates in Mg(2+) binding.

Belongs to the inositol monophosphatase superfamily. It depends on Mg(2+) as a cofactor.

It carries out the reaction a myo-inositol phosphate + H2O = myo-inositol + phosphate. It functions in the pathway polyol metabolism; myo-inositol biosynthesis; myo-inositol from D-glucose 6-phosphate: step 2/2. With respect to regulation, inhibited by Li(+). In terms of biological role, responsible for the provision of inositol required for synthesis of phosphatidylinositol and polyphosphoinositides. The chain is Inositol monophosphatase (IMP1) from Mesembryanthemum crystallinum (Common ice plant).